A 179-amino-acid chain; its full sequence is UPF0227 protein Swoo_1808 (179 aa).

This sequence belongs to the UPF0227 family.

The protein is UPF0227 protein Swoo_1808 of Shewanella woodyi (strain ATCC 51908 / MS32).